Here is a 663-residue protein sequence, read N- to C-terminus: UvrABC system protein B (663 aa).

The segment covering 1–10 (MIDKRDDKPF) has biased composition (basic and acidic residues). Positions 1-23 (MIDKRDDKPFKLKSKYKPSGDQP) are disordered. The region spanning 31–418 (DNIEGGEKAQ…TNTIIEQIIR (388 aa)) is the Helicase ATP-binding domain. 44-51 (GATGTGKT) contacts ATP. The short motif at 97-120 (YYDYYQPEAYVPSSDTYIEKDSSV) is the Beta-hairpin element. In terms of domain architecture, Helicase C-terminal spans 435-597 (QMDDLLGEIN…IVPQTIKKDI (163 aa)). In terms of domain architecture, UVR spans 627–662 (KEAINALQKQMQEAAELLDFELAAQMRDLILELKLM).

The protein belongs to the UvrB family. Forms a heterotetramer with UvrA during the search for lesions. Interacts with UvrC in an incision complex.

It localises to the cytoplasm. Its function is as follows. The UvrABC repair system catalyzes the recognition and processing of DNA lesions. A damage recognition complex composed of 2 UvrA and 2 UvrB subunits scans DNA for abnormalities. Upon binding of the UvrA(2)B(2) complex to a putative damaged site, the DNA wraps around one UvrB monomer. DNA wrap is dependent on ATP binding by UvrB and probably causes local melting of the DNA helix, facilitating insertion of UvrB beta-hairpin between the DNA strands. Then UvrB probes one DNA strand for the presence of a lesion. If a lesion is found the UvrA subunits dissociate and the UvrB-DNA preincision complex is formed. This complex is subsequently bound by UvrC and the second UvrB is released. If no lesion is found, the DNA wraps around the other UvrB subunit that will check the other stand for damage. In Streptococcus pyogenes serotype M18 (strain MGAS8232), this protein is UvrABC system protein B.